Reading from the N-terminus, the 197-residue chain is LexA repressor (197 aa).

Positions V28–V47 form a DNA-binding region, H-T-H motif. Catalysis depends on for autocatalytic cleavage activity residues S119 and K156.

Belongs to the peptidase S24 family. As to quaternary structure, homodimer.

The catalysed reaction is Hydrolysis of Ala-|-Gly bond in repressor LexA.. Represses a number of genes involved in the response to DNA damage (SOS response), including recA and lexA. In the presence of single-stranded DNA, RecA interacts with LexA causing an autocatalytic cleavage which disrupts the DNA-binding part of LexA, leading to derepression of the SOS regulon and eventually DNA repair. This is LexA repressor from Thermotoga neapolitana.